The sequence spans 325 residues: Chain length determinant protein (325 aa).

At M1–K31 the chain is on the cytoplasmic side. Residues M32 to A52 traverse the membrane as a helical segment. Topologically, residues K53–K294 are periplasmic. The helical transmembrane segment at A295–G315 threads the bilayer. Over R316–K325 the chain is Cytoplasmic.

Belongs to the WzzB/Cld/Rol family.

It is found in the cell inner membrane. It functions in the pathway bacterial outer membrane biogenesis; lipopolysaccharide biosynthesis. Functionally, confers a modal distribution of chain length on the O-antigen component of lipopolysaccharide (LPS). Gives rise to a reduced number of short chain molecules and increases in numbers of longer molecules. This is Chain length determinant protein (wzzB) from Shigella dysenteriae.